Consider the following 942-residue polypeptide: Valine--tRNA ligase (942 aa).

The short motif at 43–53 (PNVTGTLHMGH) is the 'HIGH' region element. Residues 551–555 (KMSKS) carry the 'KMSKS' region motif. Lysine 554 is a binding site for ATP. Residues 876 to 942 (EGLVDLDAER…AGLREQRAKL (67 aa)) are a coiled coil.

Belongs to the class-I aminoacyl-tRNA synthetase family. ValS type 1 subfamily. As to quaternary structure, monomer.

The protein localises to the cytoplasm. The catalysed reaction is tRNA(Val) + L-valine + ATP = L-valyl-tRNA(Val) + AMP + diphosphate. In terms of biological role, catalyzes the attachment of valine to tRNA(Val). As ValRS can inadvertently accommodate and process structurally similar amino acids such as threonine, to avoid such errors, it has a 'posttransfer' editing activity that hydrolyzes mischarged Thr-tRNA(Val) in a tRNA-dependent manner. The polypeptide is Valine--tRNA ligase (Stenotrophomonas maltophilia (strain K279a)).